The primary structure comprises 187 residues: Large ribosomal subunit protein uL6c (187 aa).

The protein belongs to the universal ribosomal protein uL6 family. In terms of assembly, part of the 50S ribosomal subunit.

The protein resides in the plastid. The protein localises to the chloroplast. In terms of biological role, binds 23S rRNA. This is Large ribosomal subunit protein uL6c (rpl6) from Thalassiosira pseudonana (Marine diatom).